The following is a 149-amino-acid chain: IQ domain-containing protein F5 (149 aa).

2 consecutive IQ domains span residues 12–41 and 68–97; these read ENKAIVSIQAWWRGTLVRRTLLHAALRAWI and QEWAVVKLQSWVRMWCIRLRYLRLLHAVRI.

In Bos taurus (Bovine), this protein is IQ domain-containing protein F5 (IQCF5).